The sequence spans 274 residues: NAD kinase (274 aa).

The active-site Proton acceptor is the aspartate 50. NAD(+) is bound by residues aspartate 50–glycine 51, asparagine 126–glutamate 127, arginine 152, aspartate 154, threonine 165–serine 170, and alanine 189.

The protein belongs to the NAD kinase family. It depends on a divalent metal cation as a cofactor.

Its subcellular location is the cytoplasm. The enzyme catalyses NAD(+) + ATP = ADP + NADP(+) + H(+). In terms of biological role, involved in the regulation of the intracellular balance of NAD and NADP, and is a key enzyme in the biosynthesis of NADP. Catalyzes specifically the phosphorylation on 2'-hydroxyl of the adenosine moiety of NAD to yield NADP. This is NAD kinase from Streptococcus gordonii (strain Challis / ATCC 35105 / BCRC 15272 / CH1 / DL1 / V288).